Here is an 890-residue protein sequence, read N- to C-terminus: Leucine-rich repeat receptor-like tyrosine-protein kinase PXC3 (890 aa).

A signal peptide spans 1 to 23 (MTFWCMSILLIVGFLSKSELCEA). Topologically, residues 24–534 (QLSDEATLVA…LRYNHRVSYR (511 aa)) are extracellular. N-linked (GlcNAc...) asparagine glycans are attached at residues N46, N61, N78, and N108. 18 LRR repeats span residues 67–85 (MLDLSGLQLRGNVTLISDL), 86–108 (RSLKHLDLSGNNFNGRIPTSFGN), 110–132 (SELEFLDLSLNRFVGAIPVEFGK), 133–157 (LRGLRAFNISNNLLVGEIPDELKVL), 159–181 (RLEEFQVSGNGLNGSIPHWVGNL), 182–205 (SSLRVFTAYENDLVGEIPNGLGLV), 206–229 (SELELLNLHSNQLEGKIPKGIFEK), 231–254 (KLKVLVLTQNRLTGELPEAVGICS), 256–276 (LSSIRIGNNELVGVIPRTIGN), 278–300 (SGLTYFEADKNNLSGEIVAEFSK), 301–325 (CSNLTLLNLAANGFAGTIPTELGQL), 326–349 (INLQELILSGNSLFGEIPKSFLGS), 350–373 (GNLNKLDLSNNRLNGTIPKELCSM), 375–397 (RLQYLLLDQNSIRGDIPHEIGNC), 399–421 (KLLQLQLGRNYLTGTIPPEIGRM), 422–446 (RNLQIALNLSFNHLHGSLPPELGKL), 447–469 (DKLVSLDVSNNLLTGSIPPLLKG), and 471–492 (MSLIEVNFSNNLLNGPVPVFVP). N140, N171, and N180 each carry an N-linked (GlcNAc...) asparagine glycan. 3 N-linked (GlcNAc...) asparagine glycosylation sites follow: N276, N289, and N303. N363 carries N-linked (GlcNAc...) asparagine glycosylation. N-linked (GlcNAc...) asparagine glycosylation occurs at N429. N-linked (GlcNAc...) asparagine glycans are attached at residues N477 and N498. A helical membrane pass occupies residues 535-555 (IVLAVIGSGVAVFVSVTVVVL). The Cytoplasmic segment spans residues 556 to 890 (LFMMREKQEK…EMLQEVKQIK (335 aa)). The Protein kinase domain occupies 608–886 (MKESNKLSTG…KKVVEMLQEV (279 aa)). ATP is bound by residues 614–622 (LSTGTFSSV) and K636. D735 (proton acceptor) is an active-site residue.

Belongs to the protein kinase superfamily. Tyr protein kinase family. As to expression, expressed in the vascular strands of cotyledons, the shoot apex, hypocotyls, roots, leaves, stems and flowers.

The protein localises to the cell membrane. The enzyme catalyses L-tyrosyl-[protein] + ATP = O-phospho-L-tyrosyl-[protein] + ADP + H(+). Functionally, leucine-rich repeat receptor-like protein kinase that may play a role in vascular tissues development. The sequence is that of Leucine-rich repeat receptor-like tyrosine-protein kinase PXC3 from Arabidopsis thaliana (Mouse-ear cress).